The primary structure comprises 129 residues: Dynein 14 kDa light chain, flagellar outer arm (129 aa).

One can recognise a Thioredoxin domain in the interval 2 to 109; that stretch reads AFITEIANEA…LNRIVTELSG (108 aa). C34 and C37 form a disulfide bridge. The interval 107-129 is disordered; that stretch reads LSGKNPPPAAPAAAPAAPAAEAS. Residues 117 to 129 are compositionally biased toward low complexity; the sequence is PAAAPAAPAAEAS.

In terms of assembly, consists of at least 3 heavy chains (alpha, beta and gamma), 2 intermediate chains and 8 light chains.

It localises to the cell projection. The protein localises to the cilium. It is found in the flagellum. Its subcellular location is the cytoplasm. The protein resides in the cytoskeleton. It localises to the flagellum axoneme. Functionally, may be involved in regulating the redox state of functionally important thiol groups within dynein. The chain is Dynein 14 kDa light chain, flagellar outer arm from Chlamydomonas reinhardtii (Chlamydomonas smithii).